A 507-amino-acid chain; its full sequence is Maturase K (507 aa).

It belongs to the intron maturase 2 family. MatK subfamily.

It is found in the plastid. It localises to the chloroplast. In terms of biological role, usually encoded in the trnK tRNA gene intron. Probably assists in splicing its own and other chloroplast group II introns. This chain is Maturase K, found in Magnolia figo (Banana shrub).